We begin with the raw amino-acid sequence, 131 residues long: Peptide methionine sulfoxide reductase MsrB (131 aa).

Residues 8–130 (LDEWRSMLDP…NSVCIDLRPR (123 aa)) enclose the MsrB domain. C47, C50, C96, and C99 together coordinate Zn(2+). C119 serves as the catalytic Nucleophile.

Belongs to the MsrB Met sulfoxide reductase family. It depends on Zn(2+) as a cofactor.

It carries out the reaction L-methionyl-[protein] + [thioredoxin]-disulfide + H2O = L-methionyl-(R)-S-oxide-[protein] + [thioredoxin]-dithiol. This is Peptide methionine sulfoxide reductase MsrB from Pseudomonas putida (strain ATCC 47054 / DSM 6125 / CFBP 8728 / NCIMB 11950 / KT2440).